Consider the following 89-residue polypeptide: Small ribosomal subunit protein uS15 (89 aa).

Belongs to the universal ribosomal protein uS15 family. In terms of assembly, part of the 30S ribosomal subunit. Forms a bridge to the 50S subunit in the 70S ribosome, contacting the 23S rRNA.

Functionally, one of the primary rRNA binding proteins, it binds directly to 16S rRNA where it helps nucleate assembly of the platform of the 30S subunit by binding and bridging several RNA helices of the 16S rRNA. Forms an intersubunit bridge (bridge B4) with the 23S rRNA of the 50S subunit in the ribosome. The protein is Small ribosomal subunit protein uS15 of Syntrophobacter fumaroxidans (strain DSM 10017 / MPOB).